The following is a 301-amino-acid chain: Methionyl-tRNA formyltransferase (301 aa).

110 to 113 is a binding site for (6S)-5,6,7,8-tetrahydrofolate; it reads SLLP.

This sequence belongs to the Fmt family.

It catalyses the reaction L-methionyl-tRNA(fMet) + (6R)-10-formyltetrahydrofolate = N-formyl-L-methionyl-tRNA(fMet) + (6S)-5,6,7,8-tetrahydrofolate + H(+). Attaches a formyl group to the free amino group of methionyl-tRNA(fMet). The formyl group appears to play a dual role in the initiator identity of N-formylmethionyl-tRNA by promoting its recognition by IF2 and preventing the misappropriation of this tRNA by the elongation apparatus. The sequence is that of Methionyl-tRNA formyltransferase from Anaplasma phagocytophilum (strain HZ).